Here is a 130-residue protein sequence, read N- to C-terminus: MDSLGSKGESRIAEWLTDKDYLILEKNWRTRTGEIDIIALDKTEQTSSGGILVFIEVKTLLKTELSDLDLIINKKKQERIIKTAKHFLANNRKYNKMYIRFDVIVLRSNPFLEQPLEILHLKDAFGDCYD.

It belongs to the UPF0102 family.

In Treponema denticola (strain ATCC 35405 / DSM 14222 / CIP 103919 / JCM 8153 / KCTC 15104), this protein is UPF0102 protein TDE_2303.